The chain runs to 319 residues: Acetyl esterase (319 aa).

Residues 91–93 (HGG) carry the Involved in the stabilization of the negatively charged intermediate by the formation of the oxyanion hole motif. Residues Ser-165, Asp-262, and His-292 contribute to the active site.

Belongs to the 'GDXG' lipolytic enzyme family. In terms of assembly, homodimer. Interacts with MalT and MelA.

The protein resides in the cytoplasm. Its function is as follows. Displays esterase activity towards short chain fatty esters (acyl chain length of up to 8 carbons). Able to hydrolyze triacetylglycerol (triacetin) and tributyrylglycerol (tributyrin), but not trioleylglycerol (triolein) or cholesterol oleate. Negatively regulates MalT activity by antagonizing maltotriose binding. Inhibits MelA galactosidase activity. The chain is Acetyl esterase from Escherichia coli O139:H28 (strain E24377A / ETEC).